A 1096-amino-acid polypeptide reads, in one-letter code: Carbamoyl phosphate synthase large chain (1096 aa).

Residues 1 to 402 (MPKRDDINSV…ALQKALRSLE (402 aa)) are carboxyphosphate synthetic domain. Residues R129, R169, G175, G176, E208, I210, E215, G241, V242, H243, Q285, and E299 each coordinate ATP. Positions 133–328 (KDLVIESGAD…IAKIAAKLAI (196 aa)) constitute an ATP-grasp 1 domain. Positions 285, 299, and 301 each coordinate Mg(2+). Mn(2+)-binding residues include Q285, E299, and N301. Residues 403–547 (KRGSSFHWGA…YSSYDSETEI (145 aa)) form an oligomerization domain region. The interval 548–950 (VPSDRRKVII…AFAKSQEAAF (403 aa)) is carbamoyl phosphate synthetic domain. The region spanning 676–870 (SGILDAAGLV…LAKAASLVMV (195 aa)) is the ATP-grasp 2 domain. The ATP site is built by R712, R754, L756, E761, G786, I787, H788, S789, Q829, and E841. Q829, E841, and N843 together coordinate Mg(2+). Mn(2+) is bound by residues Q829, E841, and N843. The region spanning 951-1095 (GGLPLSGTVF…QDYAIAREAR (145 aa)) is the MGS-like domain. Residues 951-1096 (GGLPLSGTVF…DYAIAREARR (146 aa)) are allosteric domain.

Belongs to the CarB family. In terms of assembly, composed of two chains; the small (or glutamine) chain promotes the hydrolysis of glutamine to ammonia, which is used by the large (or ammonia) chain to synthesize carbamoyl phosphate. Tetramer of heterodimers (alpha,beta)4. Requires Mg(2+) as cofactor. The cofactor is Mn(2+).

The catalysed reaction is hydrogencarbonate + L-glutamine + 2 ATP + H2O = carbamoyl phosphate + L-glutamate + 2 ADP + phosphate + 2 H(+). It carries out the reaction hydrogencarbonate + NH4(+) + 2 ATP = carbamoyl phosphate + 2 ADP + phosphate + 2 H(+). The protein operates within amino-acid biosynthesis; L-arginine biosynthesis; carbamoyl phosphate from bicarbonate: step 1/1. Its pathway is pyrimidine metabolism; UMP biosynthesis via de novo pathway; (S)-dihydroorotate from bicarbonate: step 1/3. Its function is as follows. Large subunit of the glutamine-dependent carbamoyl phosphate synthetase (CPSase). CPSase catalyzes the formation of carbamoyl phosphate from the ammonia moiety of glutamine, carbonate, and phosphate donated by ATP, constituting the first step of 2 biosynthetic pathways, one leading to arginine and/or urea and the other to pyrimidine nucleotides. The large subunit (synthetase) binds the substrates ammonia (free or transferred from glutamine from the small subunit), hydrogencarbonate and ATP and carries out an ATP-coupled ligase reaction, activating hydrogencarbonate by forming carboxy phosphate which reacts with ammonia to form carbamoyl phosphate. This Clavibacter sepedonicus (Clavibacter michiganensis subsp. sepedonicus) protein is Carbamoyl phosphate synthase large chain.